A 252-amino-acid polypeptide reads, in one-letter code: MLAKRIIAALDIKEGRVVKGIKFKNIRDAGDPIELARRYEKEGIDEIVFLDITASYEKRGILLDLVERIAEEIYVPFTVGGGIRTVEEAREIIKRGADKVFINTAAVDRPELVREIAQVVGTANLVIAIDAKWNGSFWEVYTHGGRKARGIDALEWARTVERLGAGEILLTSMDTDGTKMGFDIPLTKAVAEAVDIPVIASGGAGRPEHFYEAFKAGAEAALAASIFHYGEYTVGELKEFLAERGIPVRLDY.

Active-site residues include aspartate 11 and aspartate 130.

Belongs to the HisA/HisF family. As to quaternary structure, heterodimer of HisH and HisF.

It localises to the cytoplasm. The catalysed reaction is 5-[(5-phospho-1-deoxy-D-ribulos-1-ylimino)methylamino]-1-(5-phospho-beta-D-ribosyl)imidazole-4-carboxamide + L-glutamine = D-erythro-1-(imidazol-4-yl)glycerol 3-phosphate + 5-amino-1-(5-phospho-beta-D-ribosyl)imidazole-4-carboxamide + L-glutamate + H(+). It functions in the pathway amino-acid biosynthesis; L-histidine biosynthesis; L-histidine from 5-phospho-alpha-D-ribose 1-diphosphate: step 5/9. Its function is as follows. IGPS catalyzes the conversion of PRFAR and glutamine to IGP, AICAR and glutamate. The HisF subunit catalyzes the cyclization activity that produces IGP and AICAR from PRFAR using the ammonia provided by the HisH subunit. This chain is Imidazole glycerol phosphate synthase subunit HisF, found in Thermococcus gammatolerans (strain DSM 15229 / JCM 11827 / EJ3).